The primary structure comprises 611 residues: Glutamine--fructose-6-phosphate aminotransferase [isomerizing] (611 aa).

Cys2 (nucleophile; for GATase activity) is an active-site residue. Residues 2-219 (CGIVGAVAER…EGDIAEIRRD (218 aa)) form the Glutamine amidotransferase type-2 domain. SIS domains follow at residues 287–427 (AAEL…VKGS) and 460–601 (VAEL…VDQP). Lys606 functions as the For Fru-6P isomerization activity in the catalytic mechanism.

In terms of assembly, homodimer.

It localises to the cytoplasm. The catalysed reaction is D-fructose 6-phosphate + L-glutamine = D-glucosamine 6-phosphate + L-glutamate. Catalyzes the first step in hexosamine metabolism, converting fructose-6P into glucosamine-6P using glutamine as a nitrogen source. In Pseudomonas syringae pv. tomato (strain ATCC BAA-871 / DC3000), this protein is Glutamine--fructose-6-phosphate aminotransferase [isomerizing].